We begin with the raw amino-acid sequence, 146 residues long: Cystatin-C (146 aa).

Residues 1 to 26 (MAGPLRAPLLLLAILAVALAVSPAAG) form the signal peptide. Position 43 is a phosphoserine; by FAM20C (Ser-43). The Secondary area of contact signature appears at 81–85 (QIVAG). Disulfide bonds link Cys-99-Cys-109 and Cys-123-Cys-143.

It belongs to the cystatin family. As to quaternary structure, homodimer. Post-translationally, the Thr-25 variant is O-glycosylated with a core 1 or possibly core 8 glycan. The signal peptide of the O-glycosylated Thr-25 variant is cleaved between Ala-20 and Val-21. In terms of tissue distribution, expressed in submandibular and sublingual saliva but not in parotid saliva (at protein level). Expressed in various body fluids, such as the cerebrospinal fluid and plasma. Expressed in highest levels in the epididymis, vas deferens, brain, thymus, and ovary and the lowest in the submandibular gland.

The protein localises to the secreted. As an inhibitor of cysteine proteinases, this protein is thought to serve an important physiological role as a local regulator of this enzyme activity. In Homo sapiens (Human), this protein is Cystatin-C (CST3).